The primary structure comprises 78 residues: Large ribosomal subunit protein bL28 (78 aa).

Positions 1 to 23 are disordered; that stretch reads MSRICQITGKKPLSGNKRSHSMN.

Belongs to the bacterial ribosomal protein bL28 family.

The sequence is that of Large ribosomal subunit protein bL28 from Wigglesworthia glossinidia brevipalpis.